The sequence spans 349 residues: Alanine racemase (349 aa).

Lys35 serves as the catalytic Proton acceptor; specific for D-alanine. Lys35 is subject to N6-(pyridoxal phosphate)lysine. Substrate is bound at residue Arg130. Residue Tyr244 is the Proton acceptor; specific for L-alanine of the active site. Residue Met292 participates in substrate binding.

This sequence belongs to the alanine racemase family. It depends on pyridoxal 5'-phosphate as a cofactor.

It catalyses the reaction L-alanine = D-alanine. The protein operates within amino-acid biosynthesis; D-alanine biosynthesis; D-alanine from L-alanine: step 1/1. In terms of biological role, catalyzes the interconversion of L-alanine and D-alanine. May also act on other amino acids. This is Alanine racemase (alr) from Cereibacter sphaeroides (strain ATCC 17025 / ATH 2.4.3) (Rhodobacter sphaeroides).